The following is a 639-amino-acid chain: 2-oxoacid:ferredoxin oxidoreductase 1, subunit alpha (639 aa).

Residues 266–270 (YPITP) carry the YPITP motif motif. The substrate site is built by Thr269 and Arg352.

Heterodimer composed of an alpha and a beta subunit.

The enzyme catalyses a 2-oxocarboxylate + 2 oxidized [2Fe-2S]-[ferredoxin] + CoA = an acyl-CoA + 2 reduced [2Fe-2S]-[ferredoxin] + CO2 + H(+). Catalyzes the coenzyme A-dependent oxidative decarboxylation of different 2-oxoacids such as pyruvate, 2-oxobutyrate and glyoxylate to form their CoA derivatives. This chain is 2-oxoacid:ferredoxin oxidoreductase 1, subunit alpha, found in Aeropyrum pernix (strain ATCC 700893 / DSM 11879 / JCM 9820 / NBRC 100138 / K1).